The primary structure comprises 452 residues: Chromosomal replication initiator protein DnaA (452 aa).

Residues 1–85 form a domain I, interacts with DnaA modulators region; sequence MSTTAWQKCL…IEVGSKPVEA (85 aa). Positions 85–115 are domain II; it reads AVDTPAETIVTSSSTAPLKSAPKKAVDYKSS. Residues 116-332 are domain III, AAA+ region; the sequence is HLNKKFVFDS…GALRRVIANA (217 aa). ATP contacts are provided by G160, G162, K163, and T164. Positions 333–452 are domain IV, binds dsDNA; sequence HFTGKPITIE…YKNLMRILSS (120 aa).

Belongs to the DnaA family. Oligomerizes as a right-handed, spiral filament on DNA at oriC.

It localises to the cytoplasm. Functionally, plays an essential role in the initiation and regulation of chromosomal replication. ATP-DnaA binds to the origin of replication (oriC) to initiate formation of the DNA replication initiation complex once per cell cycle. Binds the DnaA box (a 9 base pair repeat at the origin) and separates the double-stranded (ds)DNA. Forms a right-handed helical filament on oriC DNA; dsDNA binds to the exterior of the filament while single-stranded (ss)DNA is stabiized in the filament's interior. The ATP-DnaA-oriC complex binds and stabilizes one strand of the AT-rich DNA unwinding element (DUE), permitting loading of DNA polymerase. After initiation quickly degrades to an ADP-DnaA complex that is not apt for DNA replication. Binds acidic phospholipids. This Legionella pneumophila (strain Paris) protein is Chromosomal replication initiator protein DnaA.